The following is a 453-amino-acid chain: Serine protease HTRA3 (453 aa).

Positions 1–17 (MQARALLLAALAALALA) are cleaved as a signal peptide. An IGFBP N-terminal domain is found at 21–84 (PAAPCPARCD…ECVRGLCRCR (64 aa)). Disulfide bonds link cysteine 25–cysteine 48, cysteine 29–cysteine 50, cysteine 34–cysteine 51, cysteine 39–cysteine 54, cysteine 62–cysteine 76, cysteine 70–cysteine 81, cysteine 83–cysteine 101, and cysteine 90–cysteine 126. Residues 64–128 (GPLDSPCGES…RQLQKGACPL (65 aa)) form the Kazal-like domain. The interval 175-340 (GSGFIMSEAG…AIPSDRITRF (166 aa)) is serine protease. Active-site charge relay system residues include histidine 191, aspartate 227, and serine 305. Residues 359 to 444 (IRMRTITPSL…EVRRGNDDLL (86 aa)) enclose the PDZ domain.

Belongs to the peptidase S1C family. As to quaternary structure, homotrimer. Interacts with TGFB1; the interaction inhibits TGFB-mediated signaling. Interacts with BMP4; the interaction inhibits BMP4-mediated signaling. Interacts with TGFB2 and GDF5. Interacts with MYH9. Widely expressed, with highest levels in both adult and fetal heart, ovary, uterus placenta, and bladder. In the endometrium, expressed in epithelial glands and the stroma. Also present in leukocytes. Isoform 1 is predominant in heart and skeletal muscle, whereas isoform 2 is predominant in placenta and kidney.

Its subcellular location is the secreted. Its function is as follows. Serine protease that cleaves beta-casein/CSN2 as well as several extracellular matrix (ECM) proteoglycans such as decorin/DCN, biglycan/BGN and fibronectin/FN1. Inhibits signaling mediated by TGF-beta family proteins possibly indirectly by degradation of these ECM proteoglycans. May act as a tumor suppressor. Negatively regulates, in vitro, trophoblast invasion during placental development and may be involved in the development of the placenta in vivo. May also have a role in ovarian development, granulosa cell differentiation and luteinization. The protein is Serine protease HTRA3 (HTRA3) of Homo sapiens (Human).